The following is a 123-amino-acid chain: Large ribosomal subunit protein uL14 (123 aa).

This sequence belongs to the universal ribosomal protein uL14 family. As to quaternary structure, part of the 50S ribosomal subunit. Forms a cluster with proteins L3 and L19. In the 70S ribosome, L14 and L19 interact and together make contacts with the 16S rRNA in bridges B5 and B8.

Its function is as follows. Binds to 23S rRNA. Forms part of two intersubunit bridges in the 70S ribosome. This is Large ribosomal subunit protein uL14 from Corynebacterium urealyticum (strain ATCC 43042 / DSM 7109).